The chain runs to 572 residues: Urease subunit alpha (572 aa).

Positions 133 to 572 constitute a Urease domain; the sequence is GGIDLHVHYI…TSLSQRYFLF (440 aa). Positions 138, 140, and 221 each coordinate Ni(2+). Lysine 221 bears the N6-carboxylysine mark. Residue histidine 223 participates in substrate binding. The Ni(2+) site is built by histidine 250 and histidine 276. Catalysis depends on histidine 324, which acts as the Proton donor. Ni(2+) is bound at residue aspartate 364.

The protein belongs to the metallo-dependent hydrolases superfamily. Urease alpha subunit family. In terms of assembly, heterotrimer of UreA (gamma), UreB (beta) and UreC (alpha) subunits. Three heterotrimers associate to form the active enzyme. The cofactor is Ni cation. In terms of processing, carboxylation allows a single lysine to coordinate two nickel ions.

Its subcellular location is the cytoplasm. It carries out the reaction urea + 2 H2O + H(+) = hydrogencarbonate + 2 NH4(+). It participates in nitrogen metabolism; urea degradation; CO(2) and NH(3) from urea (urease route): step 1/1. The sequence is that of Urease subunit alpha from Streptococcus thermophilus (strain CNRZ 1066).